We begin with the raw amino-acid sequence, 710 residues long: MVSSVPKLHALFVSKSQPVLRAAKVTNEERSTKSKLARSLARAVNSNPWSDELESSLSSLHPSQTISRTTVLQTLRLIKVPADGLRFFDWVSNKGFSHKEQSFFLMLEFLGRARNLNVARNFLFSIERRSNGCVKLQDRYFNSLIRSYGNAGLFQESVKLFQTMKQMGISPSVLTFNSLLSILLKRGRTGMAHDLFDEMRRTYGVTPDSYTFNTLINGFCKNSMVDEAFRIFKDMELYHCNPDVVTYNTIIDGLCRAGKVKIAHNVLSGMLKKATDVHPNVVSYTTLVRGYCMKQEIDEAVLVFHDMLSRGLKPNAVTYNTLIKGLSEAHRYDEIKDILIGGNDAFTTFAPDACTFNILIKAHCDAGHLDAAMKVFQEMLNMKLHPDSASYSVLIRTLCMRNEFDRAETLFNELFEKEVLLGKDECKPLAAAYNPMFEYLCANGKTKQAEKVFRQLMKRGVQDPPSYKTLITGHCREGKFKPAYELLVLMLRREFVPDLETYELLIDGLLKIGEALLAHDTLQRMLRSSYLPVATTFHSVLAELAKRKFANESFCLVTLMLEKRIRQNIDLSTQVVRLLFSSAQKEKAFLIVRLLYDNGYLVKMEELLGYLCENRKLLDAHTLVLFCLEKSQMVDIDTCNTVIEGLCKHKRHSEAFSLYNELVELGNHQQLSCHVVLRNALEAAGKWEELQFVSKRMATLRESDDCSVLE.

Residues 1 to 21 constitute a chloroplast transit peptide; that stretch reads MVSSVPKLHALFVSKSQPVLR. 12 PPR repeats span residues 137 to 171, 172 to 202, 208 to 242, 243 to 277, 280 to 314, 315 to 351, 352 to 386, 387 to 421, 429 to 459, 463 to 497, 498 to 532, and 533 to 567; these read QDRY…GISP, SVLT…MRRT, DSYT…HCNP, DVVT…ATDV, NVVS…GLKP, NAVT…TFAP, DACT…KLHP, DSAS…EVLL, LAAA…LMKR, DPPS…EFVP, DLET…SYLP, and VATT…RIRQ.

The protein belongs to the PPR family. P subfamily.

Its subcellular location is the plastid. It localises to the chloroplast. This is Pentatricopeptide repeat-containing protein At1g02060, chloroplastic from Arabidopsis thaliana (Mouse-ear cress).